A 126-amino-acid polypeptide reads, in one-letter code: Ribonuclease P protein component (126 aa).

The protein belongs to the RnpA family. Consists of a catalytic RNA component (M1 or rnpB) and a protein subunit.

The enzyme catalyses Endonucleolytic cleavage of RNA, removing 5'-extranucleotides from tRNA precursor.. Functionally, RNaseP catalyzes the removal of the 5'-leader sequence from pre-tRNA to produce the mature 5'-terminus. It can also cleave other RNA substrates such as 4.5S RNA. The protein component plays an auxiliary but essential role in vivo by binding to the 5'-leader sequence and broadening the substrate specificity of the ribozyme. This is Ribonuclease P protein component from Synechococcus sp. (strain JA-3-3Ab) (Cyanobacteria bacterium Yellowstone A-Prime).